The primary structure comprises 200 residues: MLKIYVVDNGGQWTHREWRVLRELGVDTKIVPNDIDSSELDGLDGLVLSGGAPNIDEELDKLGSVGKYIDDHNYPILGICVGAQFIALHFGASVVKAKHPEFGKTKVSVMHSENIFGGLPSEITVWENHNDEIINLPDDFTLAASSATCQVQGFYHKTRPIYATQFHPEVEHTQYGRDIFRNFIGICASYREIQKENFQH.

The Glutamine amidotransferase type-1 domain maps to 3 to 193 (KIYVVDNGGQ…IGICASYREI (191 aa)). Cysteine 80 acts as the Nucleophile in catalysis. Catalysis depends on residues histidine 167 and glutamate 169.

As to quaternary structure, heterodimer composed of a glutamine amidotransferase subunit (A) and a GMP-binding subunit (B).

The enzyme catalyses XMP + L-glutamine + ATP + H2O = GMP + L-glutamate + AMP + diphosphate + 2 H(+). Its pathway is purine metabolism; GMP biosynthesis; GMP from XMP (L-Gln route): step 1/1. In terms of biological role, catalyzes the synthesis of GMP from XMP. This is GMP synthase [glutamine-hydrolyzing] subunit A from Thermoplasma acidophilum (strain ATCC 25905 / DSM 1728 / JCM 9062 / NBRC 15155 / AMRC-C165).